Reading from the N-terminus, the 300-residue chain is MKIAILSRDGTLYSCKRLLDAANKRGHVVEILDPLSCYMNISPAASSIHYKGRHLPHFDAVIPRIGSQMTFYGTAALRQFEMLGSYPLNESVAITRARDKLRSLQLLARQGIDLPMTGIAHSPDDTSDLIAMVGGAPLVVKLVEGTQGIGVVLAETRQAAESVIDAFRGLNAHILVQEYIEEAKGRDIRCLVVGNEVVAAIERQAKDGDFRSNLHRGGVARIADITEREREIAITAAQTLGLDIAGVDILRANRGPLVMEVNASPGLEGIEKTTGVDIAGKMISWIERHATPGYYLKTGG.

The ATP-grasp domain occupies 104 to 287; the sequence is LQLLARQGID…IAGKMISWIE (184 aa). Residues Lys-141, 178–179, Asp-187, and 211–213 each bind ATP; these read EY and RSN. Positions 248, 260, and 262 each coordinate Mg(2+). Residues Asp-248, Glu-260, and Asn-262 each coordinate Mn(2+).

Belongs to the RimK family. Mg(2+) serves as cofactor. The cofactor is Mn(2+).

This is Probable alpha-L-glutamate ligase from Enterobacter sp. (strain 638).